An 86-amino-acid chain; its full sequence is Acyl carrier protein (86 aa).

A Carrier domain is found at 5–80; that stretch reads EEILKKVQSI…EAVEFIIDKI (76 aa). Position 40 is an O-(pantetheine 4'-phosphoryl)serine (Ser-40).

Belongs to the acyl carrier protein (ACP) family. In terms of processing, 4'-phosphopantetheine is transferred from CoA to a specific serine of apo-ACP by AcpS. This modification is essential for activity because fatty acids are bound in thioester linkage to the sulfhydryl of the prosthetic group.

The protein localises to the plastid. The protein resides in the chloroplast. It functions in the pathway lipid metabolism; fatty acid biosynthesis. Functionally, carrier of the growing fatty acid chain in fatty acid biosynthesis. This Cyanidium caldarium (Red alga) protein is Acyl carrier protein.